The following is a 413-amino-acid chain: Histidine--tRNA ligase (413 aa).

The protein belongs to the class-II aminoacyl-tRNA synthetase family.

It localises to the cytoplasm. The catalysed reaction is tRNA(His) + L-histidine + ATP = L-histidyl-tRNA(His) + AMP + diphosphate + H(+). The protein is Histidine--tRNA ligase of Methanosarcina acetivorans (strain ATCC 35395 / DSM 2834 / JCM 12185 / C2A).